The primary structure comprises 372 residues: 2,7-anhydro-N-acetylneuraminate hydratase (372 aa).

NAD(+)-binding residues include Tyr-11, Phe-12, Asp-33, Asn-36, Thr-68, Asn-70, His-73, Glu-90, Lys-91, and Trp-160.

Belongs to the Gfo/Idh/MocA family. As to quaternary structure, homodimer. Requires NAD(+) as cofactor.

It catalyses the reaction N-acetyl-2,7-anhydro-alpha-neuraminate + H2O = N-acetyl-alpha-neuraminate. The enzyme catalyses 2-deoxy-2,3-dehydro-N-acetylneuraminate + H2O = N-acetyl-alpha-neuraminate. With respect to regulation, all conversions require NAD(+) as a cofactor, which is regenerated in the reaction. The presence of EGTA and several divalent cations does not affect the activity. Hydratase involved in the degradation of sialic acids. Catalyzes the reversible conversion of the dehydrated form of N-acetylneuraminate (Neu5Ac), 2,7-anhydro-N-acetylneuraminate (2,7-AN), to Neu5Ac. Also catalyzes the irreversible conversion of 2-deoxy-2,3-didehydro-N-acetylneuraminate (2,3-EN) to Neu5Ac. The reaction mechanism involves keto intermediates and the transient formation of NADH. The protein is 2,7-anhydro-N-acetylneuraminate hydratase of Escherichia coli (strain K12).